We begin with the raw amino-acid sequence, 186 residues long: Nuclear transcription factor Y subunit C-5 (186 aa).

The disordered stretch occupies residues 166 to 186 (QMPGAWTEEDATGANGGNGGN).

It belongs to the NFYC/HAP5 subunit family. Heterotrimeric transcription factor composed of three components, NF-YA, NF-YB and NF-YC. NF-YB and NF-YC must interact and dimerize for NF-YA association and DNA binding. Expressed in inflorescences and flowers.

It localises to the nucleus. Functionally, stimulates the transcription of various genes by recognizing and binding to a CCAAT motif in promoters. The polypeptide is Nuclear transcription factor Y subunit C-5 (NFYC5) (Arabidopsis thaliana (Mouse-ear cress)).